Reading from the N-terminus, the 820-residue chain is Leucine--tRNA ligase (820 aa).

The 'HIGH' region signature appears at 42–52 (PYPSGDLHMGH). A 'KMSKS' region motif is present at residues 576 to 580 (KMSKS). Position 579 (lysine 579) interacts with ATP.

The protein belongs to the class-I aminoacyl-tRNA synthetase family.

It localises to the cytoplasm. The catalysed reaction is tRNA(Leu) + L-leucine + ATP = L-leucyl-tRNA(Leu) + AMP + diphosphate. In Coxiella burnetii (strain CbuG_Q212) (Coxiella burnetii (strain Q212)), this protein is Leucine--tRNA ligase.